A 323-amino-acid chain; its full sequence is Thiamine-monophosphate kinase (323 aa).

Positions 30, 45, 46, and 47 each coordinate Mg(2+). H54 lines the substrate pocket. Residues D75 and D122 each coordinate Mg(2+). ATP is bound by residues 121–122 and R146; that span reads GD. D212 serves as a coordination point for Mg(2+). S214 is an ATP binding site. D215 is a binding site for Mg(2+). Residues E263 and F319 each coordinate substrate.

Belongs to the thiamine-monophosphate kinase family.

The enzyme catalyses thiamine phosphate + ATP = thiamine diphosphate + ADP. It functions in the pathway cofactor biosynthesis; thiamine diphosphate biosynthesis; thiamine diphosphate from thiamine phosphate: step 1/1. In terms of biological role, catalyzes the ATP-dependent phosphorylation of thiamine-monophosphate (TMP) to form thiamine-pyrophosphate (TPP), the active form of vitamin B1. The protein is Thiamine-monophosphate kinase of Buchnera aphidicola subsp. Schizaphis graminum (strain Sg).